The primary structure comprises 115 residues: Small polypeptide DEVIL 13 (115 aa).

The span at Met1–Thr12 shows a compositional bias: basic and acidic residues. The tract at residues Met1–Ala89 is disordered. Residues Thr13–Ser65 are compositionally biased toward low complexity. Residues Ser44–Ser63 traverse the membrane as a helical segment. Residues Ser80–Lys111 form a required for DVL/RTFL small polypeptide activity region.

It belongs to the DVL/RTFL small polypeptides family.

It is found in the cell membrane. Small polypeptide acting as a regulatory molecule which coordinates cellular responses required for differentiation, growth and development, probably by restricting polar cell proliferation in lateral organs and coordinating socket cell recruitment and differentiation at trichome sites. This chain is Small polypeptide DEVIL 13, found in Arabidopsis thaliana (Mouse-ear cress).